Consider the following 399-residue polypeptide: Glucosamine kinase (399 aa).

Residues Lys98, 149-151 (EYL), and Asp156 contribute to the ATP site. Asp262 contributes to the D-glucosamine binding site. 3 residues coordinate Mg(2+): Gln267, Asp279, and Asp281. The Substrate specificity determinant motif signature appears at 366–381 (QVLREIIYAARHLPRW). Position 370 (Glu370) interacts with D-glucosamine.

The protein belongs to the actinobacterial glucosamine kinase family. In terms of assembly, monomer. The cofactor is Mg(2+).

The catalysed reaction is D-glucosamine + ATP = D-glucosamine 6-phosphate + ADP + H(+). Catalyzes the ATP-dependent phosphorylation of D-glucosamine (GlcN) to D-glucosamine 6-phosphate. May be involved in the phosphorylation of acquired extracellular GlcN derived from the hydrolysis of chitosan, i.e., in the incorporation of exogenous GlcN into the bacterial GlcNAc metabolism. Is unable to phosphorylate maltose. In Mycolicibacterium smegmatis (strain ATCC 700084 / mc(2)155) (Mycobacterium smegmatis), this protein is Glucosamine kinase.